Consider the following 295-residue polypeptide: Acetyl-coenzyme A carboxylase carboxyl transferase subunit beta (295 aa).

The segment at 1 to 20 (MSWLSKLMPSGIRTENTPAK) is disordered. Residues 28–295 (LWEKCSNCGS…QPHPQDADAA (268 aa)) enclose the CoA carboxyltransferase N-terminal domain. Residues cysteine 32, cysteine 35, cysteine 51, and cysteine 54 each contribute to the Zn(2+) site. Residues 32-54 (CSNCGSALYGPELEENLEVCPKC) form a C4-type zinc finger.

It belongs to the AccD/PCCB family. In terms of assembly, acetyl-CoA carboxylase is a heterohexamer composed of biotin carboxyl carrier protein (AccB), biotin carboxylase (AccC) and two subunits each of ACCase subunit alpha (AccA) and ACCase subunit beta (AccD). Zn(2+) serves as cofactor.

It is found in the cytoplasm. The catalysed reaction is N(6)-carboxybiotinyl-L-lysyl-[protein] + acetyl-CoA = N(6)-biotinyl-L-lysyl-[protein] + malonyl-CoA. It functions in the pathway lipid metabolism; malonyl-CoA biosynthesis; malonyl-CoA from acetyl-CoA: step 1/1. Functionally, component of the acetyl coenzyme A carboxylase (ACC) complex. Biotin carboxylase (BC) catalyzes the carboxylation of biotin on its carrier protein (BCCP) and then the CO(2) group is transferred by the transcarboxylase to acetyl-CoA to form malonyl-CoA. The sequence is that of Acetyl-coenzyme A carboxylase carboxyl transferase subunit beta from Xanthomonas campestris pv. campestris (strain 8004).